Reading from the N-terminus, the 120-residue chain is NADH dehydrogenase [ubiquinone] 1 subunit C2 (120 aa).

A helical membrane pass occupies residues 57 to 76; sequence GLHRQLLFVTSFVFAGYFYL.

The protein belongs to the complex I NDUFC2 subunit family. In terms of assembly, complex I is composed of 45 different subunits. Interacts with TMEM242.

It localises to the mitochondrion inner membrane. Functionally, accessory subunit of the mitochondrial membrane respiratory chain NADH dehydrogenase (Complex I), that is believed not to be involved in catalysis but required for the complex assembly. Complex I functions in the transfer of electrons from NADH to the respiratory chain. The immediate electron acceptor for the enzyme is believed to be ubiquinone. The chain is NADH dehydrogenase [ubiquinone] 1 subunit C2 from Mus musculus (Mouse).